Reading from the N-terminus, the 288-residue chain is Small ribosomal subunit protein uS15m (288 aa).

The transit peptide at 1–50 directs the protein to the mitochondrion; sequence MRLFEGAFQPWKLASTNLMQQCLLLNKKSQFHTTCILQGLKKQKANQRRK.

Belongs to the universal ribosomal protein uS15 family. In terms of assembly, component of the mitochondrial small ribosomal subunit (mt-SSU). Mature yeast 74S mitochondrial ribosomes consist of a small (37S) and a large (54S) subunit. The 37S small subunit contains a 15S ribosomal RNA (15S mt-rRNA) and at least 32 different proteins. The 54S large subunit contains a 21S rRNA (21S mt-rRNA) and at least 45 different proteins.

It localises to the mitochondrion. Component of the mitochondrial ribosome (mitoribosome), a dedicated translation machinery responsible for the synthesis of mitochondrial genome-encoded proteins, including at least some of the essential transmembrane subunits of the mitochondrial respiratory chain. The mitoribosomes are attached to the mitochondrial inner membrane and translation products are cotranslationally integrated into the membrane. The polypeptide is Small ribosomal subunit protein uS15m (mrps28) (Schizosaccharomyces pombe (strain 972 / ATCC 24843) (Fission yeast)).